A 341-amino-acid chain; its full sequence is Thromboxane A2 receptor (341 aa).

Over 1-29 (MWLNSTSLGACFRPVNITLQERRAIASPW) the chain is Extracellular. N-linked (GlcNAc...) asparagine glycans are attached at residues asparagine 4 and asparagine 16. A helical membrane pass occupies residues 30 to 52 (FAASFCALGLGSNLLALSVLAGA). Residues 53–65 (RPGAGPRSSFLAL) lie on the Cytoplasmic side of the membrane. The chain crosses the membrane as a helical span at residues 66 to 86 (LCGLVLTDFLGLLVTGAVVAS). Residues 87-105 (QHAALLDWRATDPGCRLCH) are Extracellular-facing. Residues cysteine 104 and cysteine 181 are joined by a disulfide bond. Residues 106-127 (FMGAAMVFFGLCPLLLGAAMAA) form a helical membrane-spanning segment. At 128–147 (ERFVGITRPFSRPAATSRRA) the chain is on the cytoplasmic side. A helical membrane pass occupies residues 148 to 170 (WATVGLVWVGAGTLGLLPLLGLG). Over 171–191 (RYSVQYPGSWCFLTLGAERGD) the chain is Extracellular. Residues 192–217 (VAFGLMFALLGSVSVGLSLLLNTVSV) traverse the membrane as a helical segment. The Cytoplasmic segment spans residues 218 to 244 (ATLCRVYHAREATQRPRDCEVEMMVQL). A helical membrane pass occupies residues 245–268 (VGIMVVATVCWMPLLVFILQTLLQ). Topologically, residues 269-287 (TLPVMSPSGQLLRTTERQL) are extracellular. Residues 288–309 (LIYLRVATWNQILDPWVYILFR) traverse the membrane as a helical segment. Over 310 to 341 (RSVLRRLHPRFTSQLQAVSLHSPPTQAMLSGP) the chain is Cytoplasmic. Residue serine 328 is modified to Phosphoserine.

This sequence belongs to the G-protein coupled receptor 1 family. As to quaternary structure, interacts with RPGRIP1L. Interacts with RACK1; the interaction regulates TBXA2R cell surface expression. In terms of tissue distribution, in the brain, expressed in all types of glial cells. In the kidney, expressed in the mesangial cells of the glomerulus, smooth muscle cells of the renal arterioles, and in transitional cell epithelium of renal pelvis.

The protein localises to the cell membrane. Functionally, receptor for thromboxane A2 (TXA2), a potent stimulator of platelet aggregation. The activity of this receptor is mediated by a G-protein that activates a phosphatidylinositol-calcium second messenger system. In the kidney, the binding of TXA2 to glomerular TP receptors causes intense vasoconstriction. Activates phospholipase C and adenylyl cyclase. This chain is Thromboxane A2 receptor (Tbxa2r), found in Rattus norvegicus (Rat).